Consider the following 476-residue polypeptide: ATP synthase subunit beta (476 aa).

157–164 serves as a coordination point for ATP; sequence GGAGVGKT.

Belongs to the ATPase alpha/beta chains family. In terms of assembly, F-type ATPases have 2 components, CF(1) - the catalytic core - and CF(0) - the membrane proton channel. CF(1) has five subunits: alpha(3), beta(3), gamma(1), delta(1), epsilon(1). CF(0) has three main subunits: a(1), b(2) and c(9-12). The alpha and beta chains form an alternating ring which encloses part of the gamma chain. CF(1) is attached to CF(0) by a central stalk formed by the gamma and epsilon chains, while a peripheral stalk is formed by the delta and b chains.

It is found in the cell membrane. The enzyme catalyses ATP + H2O + 4 H(+)(in) = ADP + phosphate + 5 H(+)(out). Its function is as follows. Produces ATP from ADP in the presence of a proton gradient across the membrane. The catalytic sites are hosted primarily by the beta subunits. The chain is ATP synthase subunit beta from Mycoplasma genitalium (strain ATCC 33530 / DSM 19775 / NCTC 10195 / G37) (Mycoplasmoides genitalium).